The primary structure comprises 441 residues: G-protein coupled receptor family C group 5 member C (441 aa).

A signal peptide spans 1–23 (MAIHKALVMCLGLPLFLFPGAWA). Residues 24 to 50 (QGHVPPGCSQGLNPLYYNLCDRSGAWG) are Extracellular-facing. The helical transmembrane segment at 51–71 (IVLEAVAGAGIVTTFVLTIIL) threads the bilayer. At 72 to 85 (VASLPFVQDTKKRS) the chain is on the cytoplasmic side. Residues 86–106 (LLGTQVFFLLGTLGLFCLVFA) form a helical membrane-spanning segment. The Extracellular portion of the chain corresponds to 107-120 (CVVKPDFSTCASRR). The chain crosses the membrane as a helical span at residues 121–141 (FLFGVLFAICFSCLAAHVFAL). Topologically, residues 142 to 155 (NFLARKNHGPRGWV) are cytoplasmic. Residues 156 to 176 (IFTVALLLTLVEVIINTEWLI) form a helical membrane-spanning segment. Topologically, residues 177-208 (ITLVRGSGEGGPQGNSSAGWAVASPCAIANMD) are extracellular. A glycan (N-linked (GlcNAc...) asparagine) is linked at Asn-191. Residues 209–229 (FVMALIYVMLLLLGAFLGAWP) form a helical membrane-spanning segment. Residues 230–241 (ALCGRYKRWRKH) lie on the Cytoplasmic side of the membrane. A helical membrane pass occupies residues 242-262 (GVFVLLTTATSVAIWVVWIVM). Topologically, residues 263–279 (YTYGNKQHNSPTWDDPT) are extracellular. A helical transmembrane segment spans residues 280–300 (LAIALAANAWAFVLFYVIPEV). Residues 301 to 441 (SQVTKSSPEQ…QVFRNPYVWD (141 aa)) lie on the Cytoplasmic side of the membrane. A phosphoserine mark is found at Ser-344, Ser-383, Ser-403, and Ser-406. The segment at 412 to 441 (DMYSAQSHQAATPPKDGKNSQVFRNPYVWD) is disordered. A Phosphotyrosine modification is found at Tyr-414. A Phosphothreonine modification is found at Thr-423.

The protein belongs to the G-protein coupled receptor 3 family. In terms of tissue distribution, expression is highest in the periphery, particularly in the stomach, but also in the kidney, liver, pancreas, and prostate. In brain, levels of expression are generally lower than in the periphery, with the exception of cerebellum, spinal cord, and dorsal root ganglia (DRG).

Its subcellular location is the cell membrane. The protein localises to the cytoplasmic vesicle membrane. Functionally, this retinoic acid-inducible G-protein coupled receptor provide evidence for a possible interaction between retinoid and G-protein signaling pathways. This Homo sapiens (Human) protein is G-protein coupled receptor family C group 5 member C (GPRC5C).